A 149-amino-acid chain; its full sequence is Large ribosomal subunit protein eL19 (149 aa).

A disordered region spans residues 67–90 (KRKLQKRKGRRRGHGSRKGAKGAR).

This sequence belongs to the eukaryotic ribosomal protein eL19 family. As to quaternary structure, part of the 50S ribosomal subunit.

Functionally, binds to the 23S rRNA. This Archaeoglobus fulgidus (strain ATCC 49558 / DSM 4304 / JCM 9628 / NBRC 100126 / VC-16) protein is Large ribosomal subunit protein eL19.